Consider the following 325-residue polypeptide: Lipid droplet-associated hydrolase (325 aa).

Ser139 (nucleophile) is an active-site residue. Active-site charge relay system residues include Asp271 and His300.

The protein belongs to the AB hydrolase superfamily. LDAH family.

The protein resides in the lipid droplet. It localises to the endoplasmic reticulum. It carries out the reaction a cholesterol ester + H2O = cholesterol + a fatty acid + H(+). Probable serine lipid hydrolase associated with lipid droplets. Has low cholesterol esterase activity. Appears to lack triglyceride lipase activity. Involved in cholesterol and triglyceride homeostasis; stimulates cellular triglyceride accumulation and cellular cholesterol release. Acts antagonistically with PNPLA2/ATGL in regulation of cellular lipid stores. May regulate triglyceride accumulation indirectly through stimulation of PNPLA2/ATGL ubiquitination and proteasomal degradation. Promotes microtubule-dependent lipid droplet fusion. Highly expressed in macrophage-rich areas in atherosclerotic lesions, suggesting that it could promote cholesterol ester turnover in macrophages. The polypeptide is Lipid droplet-associated hydrolase (Rattus norvegicus (Rat)).